The sequence spans 858 residues: Elongation factor 2 (858 aa).

The 346-residue stretch at 17 to 362 (ANIRNMSVIA…MITIHLPSPV (346 aa)) folds into the tr-type G domain. Position 26–33 (26–33 (AHVDHGKS)) interacts with GTP. 2 positions are modified to phosphothreonine: threonine 57 and threonine 59. Residues 158–161 (NKMD) and 216–218 (SGL) each bind GTP. Diphthamide is present on histidine 715.

This sequence belongs to the TRAFAC class translation factor GTPase superfamily. Classic translation factor GTPase family. EF-G/EF-2 subfamily. As to quaternary structure, binds to 80S ribosomes. Actively translating ribosomes show mutually exclusive binding of eIF5a (EIF5A or EIF5A2) and EEF2/eEF2. Interacts with SERBP1; interaction sequesters EEF2/eEF2 at the A-site of the ribosome, thereby blocking the interaction sites of the mRNA-tRNA complex, promoting ribosome stabilization and hibernation. Interacts with HABP4; interaction takes place at the A-site of hibernating ribosomes and promotes ribosome stabilization. Post-translationally, phosphorylation by EF-2 kinase completely inactivates EF-2. Diphthamide is 2-[3-carboxyamido-3-(trimethyl-ammonio)propyl]histidine.

It localises to the cytoplasm. Its subcellular location is the nucleus. The enzyme catalyses GTP + H2O = GDP + phosphate + H(+). Catalyzes the GTP-dependent ribosomal translocation step during translation elongation. During this step, the ribosome changes from the pre-translocational (PRE) to the post-translocational (POST) state as the newly formed A-site-bound peptidyl-tRNA and P-site-bound deacylated tRNA move to the P and E sites, respectively. Catalyzes the coordinated movement of the two tRNA molecules, the mRNA and conformational changes in the ribosome. The protein is Elongation factor 2 (EEF2) of Gallus gallus (Chicken).